The chain runs to 824 residues: Serine/threonine-protein kinase SCH9 (824 aa).

Over residues 1-23 the composition is skewed to polar residues; the sequence is MMNFFTSKSSNQDTGFSSQHQHP. 4 disordered regions span residues 1-37, 125-152, 221-272, and 285-327; these read MMNFFTSKSSNQDTGFSSQHQHPNGQNNGNNNSSTAG, NAGNVHGDTGGNSLQNSEDDNFSSSSTT, ESLG…SQLP, and THRS…SHPI. Positions 24-37 are enriched in low complexity; that stretch reads NGQNNGNNNSSTAG. The C2 domain maps to 166–378; sequence QREAAAAAYG…LAHASQHQWH (213 aa). Over residues 226-248 the composition is skewed to low complexity; that stretch reads INNNNNNNNNNQHNQNQHINNNN. Polar residues-rich tracts occupy residues 249-272 and 286-302; these read ENTNPDAASQHHNNNSGWNGSQLP and HRSSSQLDQLNSCSSVT. Positions 307 to 321 are enriched in low complexity; the sequence is RSSNSSSGSSNGPKN. In terms of domain architecture, Protein kinase spans 412–671; that stretch reads FEVLRLLGKG…GRELRAHPFF (260 aa). ATP is bound by residues 418–426 and K441; that span reads LGKGTFGQV. D538 serves as the catalytic Proton acceptor. T570 is modified (phosphothreonine; by PKH1 or PKH2). Residues 672–748 form the AGC-kinase C-terminal domain; it reads ADIDWEALKQ…VDESAIDEHV (77 aa). A Phosphoserine; by TORC1 modification is found at S711. A Phosphothreonine; by TORC1 modification is found at T723. Position 726 is a phosphoserine; by TORC1 (S726). T737 carries the post-translational modification Phosphothreonine; by TORC1. Residues S758 and S765 each carry the phosphoserine; by TORC1 modification.

It belongs to the protein kinase superfamily. AGC Ser/Thr protein kinase family. cAMP subfamily. Post-translationally, phosphorylated by TORC1 in nutrient-replete conditions and during mechanical stress.

The catalysed reaction is L-seryl-[protein] + ATP = O-phospho-L-seryl-[protein] + ADP + H(+). It carries out the reaction L-threonyl-[protein] + ATP = O-phospho-L-threonyl-[protein] + ADP + H(+). Its activity is regulated as follows. Activated by cAMP. Functionally, protein kinase that is part of growth control pathway which is at least partially redundant with the cAMP pathway. Regulates both BCY1 phosphorylation and MPK1 activity. Regulates ribosome biogenesis, translation initiation, and entry into stationary phase in a TORC1-dependent manner. This chain is Serine/threonine-protein kinase SCH9 (SCH9), found in Saccharomyces cerevisiae (strain ATCC 204508 / S288c) (Baker's yeast).